Consider the following 531-residue polypeptide: Phosphomethylpyrimidine synthase (531 aa).

Residues N167, M196, Y225, H261, 281 to 283 (SRG), 322 to 325 (DALR), and E361 each bind substrate. Zn(2+) is bound at residue H365. Y388 contacts substrate. Position 429 (H429) interacts with Zn(2+). [4Fe-4S] cluster is bound by residues C511, C514, and C519.

The protein belongs to the ThiC family. The cofactor is [4Fe-4S] cluster.

It catalyses the reaction 5-amino-1-(5-phospho-beta-D-ribosyl)imidazole + S-adenosyl-L-methionine = 4-amino-2-methyl-5-(phosphooxymethyl)pyrimidine + CO + 5'-deoxyadenosine + formate + L-methionine + 3 H(+). The protein operates within cofactor biosynthesis; thiamine diphosphate biosynthesis. Catalyzes the synthesis of the hydroxymethylpyrimidine phosphate (HMP-P) moiety of thiamine from aminoimidazole ribotide (AIR) in a radical S-adenosyl-L-methionine (SAM)-dependent reaction. The polypeptide is Phosphomethylpyrimidine synthase (Chlorobium chlorochromatii (strain CaD3)).